The sequence spans 755 residues: Histone-lysine N-methyltransferase, H3 lysine-9 specific SUVH8 (755 aa).

Disordered stretches follow at residues 62-98 (YDRD…PPQT) and 111-243 (YDRD…KMVI). Composition is skewed to basic and acidic residues over residues 73-86 (VHRE…EEAH) and 122-135 (IDRE…EDAH). The a.T hook DNA-binding region spans 174–186 (KRGRGRPKGSKNG). A compositionally biased stretch (basic residues) spans 174–193 (KRGRGRPKGSKNGSRKPKKP). Polar residues predominate over residues 197–207 (DNNSTDASAGP). Residues 212–231 (GKRRCGRPKGLKNRSRKPKK) are compositionally biased toward basic residues. A YDG domain is found at 310–448 (GPIPGVQVGD…FKEYRFKLLR (139 aa)). In terms of domain architecture, Pre-SET spans 528-578 (QSLVQSYIHQNCTCILKNCGQLPYHDNILVCRKPLIYECGGSCPTRMVETG). The region spanning 581 to 723 (LHLEVFKTSN…PMTELTYDYG (143 aa)) is the SET domain. S-adenosyl-L-methionine-binding positions include 591 to 593 (CGW), Asp-624, Tyr-626, Arg-676, and 679 to 680 (NH). Zn(2+) contacts are provided by Cys-682, Cys-743, Cys-745, and Cys-750. A Post-SET domain is found at 739–755 (GKKICLCGSVKCRGSFG).

The protein belongs to the class V-like SAM-binding methyltransferase superfamily. Histone-lysine methyltransferase family. Suvar3-9 subfamily.

It is found in the nucleus. It localises to the chromosome. Its subcellular location is the centromere. The catalysed reaction is N(6)-methyl-L-lysyl(9)-[histone H3] + S-adenosyl-L-methionine = N(6),N(6)-dimethyl-L-lysyl(9)-[histone H3] + S-adenosyl-L-homocysteine + H(+). The enzyme catalyses L-lysyl(9)-[histone H3] + S-adenosyl-L-methionine = N(6)-methyl-L-lysyl(9)-[histone H3] + S-adenosyl-L-homocysteine + H(+). Histone methyltransferase. Methylates 'Lys-9' of histone H3. H3 'Lys-9' methylation represents a specific tag for epigenetic transcriptional repression. This is Histone-lysine N-methyltransferase, H3 lysine-9 specific SUVH8 (SUVH8) from Arabidopsis thaliana (Mouse-ear cress).